We begin with the raw amino-acid sequence, 607 residues long: NAD-dependent protein deacetylase sir-2.1 (607 aa).

The segment at 1 to 68 (MSRDSGNDSE…SVSSESWQNN (68 aa)) is disordered. Residues 55-64 (ESTTSVSSES) are compositionally biased toward low complexity. Residues 128–401 (KLTNYNSLAD…DSIMEQQGKT (274 aa)) enclose the Deacetylase sirtuin-type domain. NAD(+) is bound by residues 153-172 (GAGVSVSCGIPDFRSKDGIY) and 237-240 (QNID). Catalysis depends on His-255, which acts as the Proton acceptor. Zn(2+) is bound by residues Cys-263, Cys-266, Cys-287, and Cys-290. Residues 327-329 (GSS), 352-354 (NRE), and Cys-369 contribute to the NAD(+) site. Positions 426–453 (EKRNDDSSDEPTLKKPRMSVADDSMDSE) are disordered.

This sequence belongs to the sirtuin family. Class I subfamily. Interacts with ftt-2 and par-5. Interacts with daf-16 following heat-shock, which causes daf-16 to accumulate in the nucleus. Interaction with daf-16 is promoted by ftt-2. Interacts with transcriptional coregulator hcf-1. Zn(2+) is required as a cofactor.

It is found in the nucleus. It localises to the cytoplasm. The catalysed reaction is N(6)-acetyl-L-lysyl-[protein] + NAD(+) + H2O = 2''-O-acetyl-ADP-D-ribose + nicotinamide + L-lysyl-[protein]. In terms of biological role, NAD-dependent deacetylase. Involved in metabolism, apoptosis, response to oxidative stress, response to DNA damage, and determination of lifespan. Required for a reduction of the 'Lys-16' acetylation of histone H4 (H4K16ac) on dosage-compensated X chromosomes in hermaphrodites. Plays a role in germ cell and somatic cell apoptosis in response to DNA damage. Functions upstream of daf-16/Forkhead box protein O in the Insulin/IGF-1-like signaling (IIS) mediated pathway, promoting daf-16 mediated transcriptional activation and increased lifespan. May also regulate lifespan independently of daf-16 by modulating the transcription of genes involved in the stress response of the endoplasmic reticulum (ER). Functions upstream of transcriptional coregulator hcf-1, perhaps acting independently of the IIS mediated pathway, to modulate lifespan and oxidative stress response. Acts upstream of the nicotinic acid metabolism pathway, which may be linked to the regulation of longevity. Plays a role in ascaroside-mediated longevity and stress resistance. The protein is NAD-dependent protein deacetylase sir-2.1 of Caenorhabditis elegans.